Reading from the N-terminus, the 216-residue chain is MOB kinase activator 3C (216 aa).

Residues C82, C87, H164, and H169 each coordinate Zn(2+).

The protein belongs to the MOB1/phocein family.

In terms of biological role, may regulate the activity of kinases. This chain is MOB kinase activator 3C (MOB3C), found in Homo sapiens (Human).